The primary structure comprises 380 residues: Cytochrome b (380 aa).

A run of 4 helical transmembrane segments spans residues 33-53 (FGSLLGLCLLTQILTGLFLAM), 77-98 (WLIRNFHANGASFFFICLYLHI), 113-133 (WNVGVVLFLLVMMTAFVGYVL), and 178-198 (FFAFHFLFPFIIAAMTILHFL). Heme b-binding residues include His83 and His97. Heme b contacts are provided by His182 and His196. His201 serves as a coordination point for a ubiquinone. Transmembrane regions (helical) follow at residues 226-246 (YKDLLGFVVMLLALSTLSLFS), 288-308 (LGGVLALLSSILILMLVPILH), 320-340 (LTQILFWVLVADVAILTWIGG), and 347-367 (FIIVGQVASVLYFALFLVIMP).

Belongs to the cytochrome b family. In terms of assembly, the cytochrome bc1 complex contains 3 respiratory subunits (MT-CYB, CYC1 and UQCRFS1), 2 core proteins (UQCRC1 and UQCRC2) and probably 6 low-molecular weight proteins. Requires heme b as cofactor.

The protein localises to the mitochondrion inner membrane. Component of the ubiquinol-cytochrome c reductase complex (complex III or cytochrome b-c1 complex) that is part of the mitochondrial respiratory chain. The b-c1 complex mediates electron transfer from ubiquinol to cytochrome c. Contributes to the generation of a proton gradient across the mitochondrial membrane that is then used for ATP synthesis. This Zeus faber (John Dory) protein is Cytochrome b (mt-cyb).